A 272-amino-acid polypeptide reads, in one-letter code: 2-amino-3,7-dideoxy-D-threo-hept-6-ulosonate synthase (272 aa).

The active-site Proton acceptor is Asp-33. 1-deoxy-D-threo-hexo-2,5-diulose 6-phosphate contacts are provided by residues 33–37 (DHGVS) and 153–155 (YPR). Tyr-153 serves as the catalytic Proton donor. Catalysis depends on Lys-184, which acts as the Schiff-base intermediate with substrate. 1-deoxy-D-threo-hexo-2,5-diulose 6-phosphate contacts are provided by residues 209-210 (GG) and 237-238 (GR).

The protein belongs to the DeoC/FbaB aldolase family. ADHS subfamily. As to quaternary structure, homodecamer.

The enzyme catalyses 1-deoxy-D-threo-hexo-2,5-diulose 6-phosphate + L-aspartate 4-semialdehyde = 2,3-dioxopropyl phosphate + 2-amino-2,3,7-trideoxy-D-lyxo-hept-6-ulosonate. Catalyzes a transaldol reaction between 6-deoxy-5-ketofructose 1-phosphate (DKFP) and L-aspartate semialdehyde (ASA) with an elimination of hydroxypyruvaldehyde phosphate to yield 2-amino-3,7-dideoxy-D-threo-hept-6-ulosonate (ADH). Plays a key role in an alternative pathway of the biosynthesis of 3-dehydroquinate (DHQ), which is involved in the canonical pathway for the biosynthesis of aromatic amino acids and which is also a precursor for the biosynthesis of p-aminobenzoic acid (PABA) in M.maripaludis. Does not possess fructose-bisphosphate (FBP) aldolase activity. This Methanococcus maripaludis (strain DSM 14266 / JCM 13030 / NBRC 101832 / S2 / LL) protein is 2-amino-3,7-dideoxy-D-threo-hept-6-ulosonate synthase.